A 400-amino-acid polypeptide reads, in one-letter code: Putative zinc-binding protein ORF78 (400 aa).

Residues 9 to 33 are disordered; sequence LPRKRRAVAQPRTRQPPPKVHREDT.

The polypeptide is Putative zinc-binding protein ORF78 (ORF78) (Ictalurid herpesvirus 1 (strain Auburn) (IcHV-1)).